Reading from the N-terminus, the 352-residue chain is Phosphate acyltransferase (352 aa).

The protein belongs to the PlsX family. In terms of assembly, homodimer. Probably interacts with PlsY.

Its subcellular location is the cytoplasm. It carries out the reaction a fatty acyl-[ACP] + phosphate = an acyl phosphate + holo-[ACP]. It participates in lipid metabolism; phospholipid metabolism. Its function is as follows. Catalyzes the reversible formation of acyl-phosphate (acyl-PO(4)) from acyl-[acyl-carrier-protein] (acyl-ACP). This enzyme utilizes acyl-ACP as fatty acyl donor, but not acyl-CoA. The polypeptide is Phosphate acyltransferase (Brucella anthropi (strain ATCC 49188 / DSM 6882 / CCUG 24695 / JCM 21032 / LMG 3331 / NBRC 15819 / NCTC 12168 / Alc 37) (Ochrobactrum anthropi)).